We begin with the raw amino-acid sequence, 410 residues long: MFSIFNSPCVFEQLPSFSQPLHSRYFDCSSPVSYYPECKRRKAIKANLRAPKKSDANCSEPLRYALAETPNGYTLSLSKRIPYELFSKYVNEKLGELKENHYRPTYHVVQDFFGNQYYVEDEADEDALLRSALKDLDFRAIGKKIAKDLFQDYEIELNHRGDELSILSKKDKIFKEFSLDQVFEDVFVIGCGVENIDDGSREKYALLKIGLVKHEEEISEGGINEPKMPIIESKIDESHDDVNMSESLKEEEAEKAKEPLTKEDQIKKWIEEERLMQEESRKSEQEKAAKEDEERQKKEKEARLKARKESLINKQKTKRSQQKKLQNSKSLPISEIEASNKNNNSNSGSAESDNESINSDSDTTLDFSVSGNTLKKHASPLLEDVEDEEVDRYNESLSRSPKGNSIIEEI.

2 disordered regions span residues 223 to 264 and 276 to 410; these read INEP…TKED and MQEE…IEEI. 2 stretches are compositionally biased toward basic and acidic residues: residues 233–264 and 276–311; these read SKIDESHDDVNMSESLKEEEAEKAKEPLTKED and MQEESRKSEQEKAAKEDEERQKKEKEARLKARKESL. Positions 243–330 form a coiled coil; that stretch reads NMSESLKEEE…QQKKLQNSKS (88 aa). Positions 334-362 are enriched in low complexity; that stretch reads SEIEASNKNNNSNSGSAESDNESINSDSD. The span at 364–373 shows a compositional bias: polar residues; sequence TLDFSVSGNT.

Interacts with RHB1, IST2, TDA3 and YIF1.

It localises to the cytoplasm. It is found in the late endosome. Its function is as follows. V-SNARE binding protein that facilitates specific protein retrieval from a late endosome to the Golgi. Modulates the rate of arginine uptake. Involved in pH homeostasis. Required for the correct localization of IST2. May be involved in ion homeostasis together with IST2. This chain is Protein BTN2 (BTN2), found in Saccharomyces cerevisiae (strain ATCC 204508 / S288c) (Baker's yeast).